Here is a 795-residue protein sequence, read N- to C-terminus: Phenylalanine--tRNA ligase beta subunit (795 aa).

Positions 39 to 148 (AAKFNGVLVG…SDAPVGTDLR (110 aa)) constitute a tRNA-binding domain. The B5 domain maps to 401 to 476 (PKVTEVRLRR…RVYGYNSIPN (76 aa)). Mg(2+)-binding residues include Asp-454, Asp-460, Glu-463, and Glu-464. In terms of domain architecture, FDX-ACB spans 701-794 (SKFPSNRRDI…LAEQFNASLR (94 aa)).

This sequence belongs to the phenylalanyl-tRNA synthetase beta subunit family. Type 1 subfamily. Tetramer of two alpha and two beta subunits. Requires Mg(2+) as cofactor.

Its subcellular location is the cytoplasm. It carries out the reaction tRNA(Phe) + L-phenylalanine + ATP = L-phenylalanyl-tRNA(Phe) + AMP + diphosphate + H(+). The chain is Phenylalanine--tRNA ligase beta subunit from Pseudoalteromonas translucida (strain TAC 125).